The chain runs to 511 residues: 2-isopropylmalate synthase (511 aa).

In terms of domain architecture, Pyruvate carboxyltransferase spans 4 to 266 (IRIFDTTLRD…ETGIDLSQLY (263 aa)). The Mn(2+) site is built by Asp13, His201, His203, and Asn237. Residues 391–511 (VLEKIRVVSG…IAANARAQKN (121 aa)) form a regulatory domain region.

This sequence belongs to the alpha-IPM synthase/homocitrate synthase family. LeuA type 1 subfamily. As to quaternary structure, homodimer. The cofactor is Mn(2+).

Its subcellular location is the cytoplasm. It catalyses the reaction 3-methyl-2-oxobutanoate + acetyl-CoA + H2O = (2S)-2-isopropylmalate + CoA + H(+). It participates in amino-acid biosynthesis; L-leucine biosynthesis; L-leucine from 3-methyl-2-oxobutanoate: step 1/4. Catalyzes the condensation of the acetyl group of acetyl-CoA with 3-methyl-2-oxobutanoate (2-ketoisovalerate) to form 3-carboxy-3-hydroxy-4-methylpentanoate (2-isopropylmalate). This Acetivibrio thermocellus (strain ATCC 27405 / DSM 1237 / JCM 9322 / NBRC 103400 / NCIMB 10682 / NRRL B-4536 / VPI 7372) (Clostridium thermocellum) protein is 2-isopropylmalate synthase.